Consider the following 538-residue polypeptide: Lipid scramblase CLPTM1L (538 aa).

Residues 1 to 9 (MFPKTSFTS) are Cytoplasmic-facing. Residues 10–30 (LIVGVFLLYVLHTCWVMYGIV) traverse the membrane as a helical segment. Residues 31–284 (YTKPCEKRRA…IKGIFVDTNL (254 aa)) lie on the Extracellular side of the membrane. Residues asparagine 90 and asparagine 100 are each glycosylated (N-linked (GlcNAc...) asparagine). The interval 140-166 (ISLITGQDEPEKPDQQKQSSDSELDRP) is disordered. Residue asparagine 229 is glycosylated (N-linked (GlcNAc...) asparagine). Residues 285 to 305 (YFLALTFFVAAFHLLFDFLAF) traverse the membrane as a helical segment. Topologically, residues 306 to 324 (KNDISFWKHKKSMVGMSSK) are cytoplasmic. A helical transmembrane segment spans residues 325-341 (AVLWRCFSTIVIFLYLL). Residues 342–402 (DEQTSLLVLV…TEEYDTLAMK (61 aa)) lie on the Extracellular side of the membrane. A helical transmembrane segment spans residues 403–423 (YLSYLLYPLCVGGAVYALVFV). Residues 424 to 428 (KYKSW) lie on the Cytoplasmic side of the membrane. The chain crosses the membrane as a helical span at residues 429–449 (YSWIINSLVNGVYAFGFLFML). Topologically, residues 450-538 (PQLFVNYKLK…EKPKGKSHED (89 aa)) are extracellular.

It belongs to the CLPTM1 family.

It is found in the endoplasmic reticulum membrane. The enzyme catalyses a 6-(alpha-D-glucosaminyl)-1-(1,2-diacyl-sn-glycero-3-phospho)-1D-myo-inositol(in) = a 6-(alpha-D-glucosaminyl)-1-(1,2-diacyl-sn-glycero-3-phospho)-1D-myo-inositol(out). It catalyses the reaction 6-(alpha-D-glucosaminyl)-(1-octadecanoyl,2-(9Z)-octadecenoyl-sn-glycero-3-phospho)-1D-myo-inositol(in) = 6-(alpha-D-glucosaminyl)-(1-octadecanoyl,2-(9Z)-octadecenoyl-sn-glycero-3-phospho)-1D-myo-inositol(out). The catalysed reaction is a 1,2-diacyl-sn-glycero-3-phospho-(1D-myo-inositol)(in) = a 1,2-diacyl-sn-glycero-3-phospho-(1D-myo-inositol)(out). It carries out the reaction a 1,2-diacyl-sn-glycero-3-phosphocholine(in) = a 1,2-diacyl-sn-glycero-3-phosphocholine(out). The enzyme catalyses a 1,2-diacyl-sn-glycero-3-phosphoethanolamine(in) = a 1,2-diacyl-sn-glycero-3-phosphoethanolamine(out). Scramblase that mediates the translocation of glucosaminylphosphatidylinositol (alpha-D-GlcN-(1-6)-(1,2-diacyl-sn-glycero-3-phospho)-1D-myo-inositol, GlcN-PI) across the endoplasmic reticulum (ER) membrane, from the cytosolic leaflet to the luminal leaflet of the ER membrane, where it participates in the biosynthesis of glycosylphosphatidylinositol (GPI). GPI is a lipid glycoconjugate involved in post-translational modification of proteins. Can also translocate 1,2-diacyl-sn-glycero-3-phospho-(1D-myo-inositol) (phosphatidylinositol or PI), as well as several other phospholipids (1,2-diacyl-sn-glycero-3-phosphocholine, 1,2-diacyl-sn-glycero-3-phosphoethanolamine), and N-acetylglucosaminylphosphatidylinositol (GlcNAc-PI) in vitro. The chain is Lipid scramblase CLPTM1L (clptm1l) from Danio rerio (Zebrafish).